A 68-amino-acid polypeptide reads, in one-letter code: Protein SlyX homolog (68 aa).

It belongs to the SlyX family.

This is Protein SlyX homolog from Brucella abortus (strain S19).